The sequence spans 153 residues: Proline-rich membrane anchor 1 (153 aa).

Residues 1 to 35 (MLLRDLVPRHGCCWPSLLLHCALHPLWGLVQVTHA) form the signal peptide. The Extracellular portion of the chain corresponds to 36 to 92 (EPQKSCSKVTDSCQHICQCRPPPPLPPPPPPPPPPRLLSAPAPNSTSCPAEDSWWSG). Positions 56-70 (PPPPLPPPPPPPPPP) constitute a PRAD domain. The span at 59–71 (PLPPPPPPPPPPR) shows a compositional bias: pro residues. Residues 59 to 79 (PLPPPPPPPPPPRLLSAPAPN) form a disordered region. A glycan (N-linked (GlcNAc...) asparagine) is linked at asparagine 79. Residues 93–113 (LVIIVAVVCASLVFLTVLVII) traverse the membrane as a helical segment. At 114-153 (CYKAIKRKPLRKDENGTSVAEYPMSSSQSHKGVDVNAAVV) the chain is on the cytoplasmic side. The interval 129–153 (GTSVAEYPMSSSQSHKGVDVNAAVV) is disordered.

Interacts with ACHE, probably through disulfide bonds. As to expression, predominantly expressed in the central nervous system, including in the brain. Also expressed in muscle, heart and kidney. Isoform 1 may be predominant in the cortex and striatum, while isoform 2 is more abundant in the cerebellum.

It localises to the cell membrane. Its subcellular location is the cell junction. The protein localises to the synapse. Required to anchor acetylcholinesterase (ACHE) to the basal lamina of the neuromuscular junction and to the membrane of neuronal synapses in brain. Also able to organize ACHE into tetramers. This chain is Proline-rich membrane anchor 1 (Prima1), found in Mus musculus (Mouse).